We begin with the raw amino-acid sequence, 201 residues long: Potassium-transporting ATPase KdpC subunit (201 aa).

Residues 10–30 traverse the membrane as a helical segment; sequence VVLVVLTVICGLAYPLAMTGI. The tract at residues 67-105 is disordered; it reads HGRPSATSAADPADPTKTVSSPYNAANSSGSNLGPTSKA. The segment covering 70–82 has biased composition (low complexity); that stretch reads PSATSAADPADPT. The span at 83-105 shows a compositional bias: polar residues; the sequence is KTVSSPYNAANSSGSNLGPTSKA.

The protein belongs to the KdpC family. The system is composed of three essential subunits: KdpA, KdpB and KdpC.

The protein localises to the cell inner membrane. Functionally, part of the high-affinity ATP-driven potassium transport (or Kdp) system, which catalyzes the hydrolysis of ATP coupled with the electrogenic transport of potassium into the cytoplasm. This subunit acts as a catalytic chaperone that increases the ATP-binding affinity of the ATP-hydrolyzing subunit KdpB by the formation of a transient KdpB/KdpC/ATP ternary complex. In Rhodopseudomonas palustris (strain BisB5), this protein is Potassium-transporting ATPase KdpC subunit.